A 20-amino-acid polypeptide reads, in one-letter code: Unknown protein NF040 from 2D-PAGE (20 aa).

Positions 1-20 (MKVYTDIFTRDEFLSDSYPM) constitute a TCTP domain.

It belongs to the TCTP family.

In Naegleria fowleri (Brain eating amoeba), this protein is Unknown protein NF040 from 2D-PAGE.